The chain runs to 198 residues: dTTP/UTP pyrophosphatase (198 aa).

Asp-75 acts as the Proton acceptor in catalysis.

It belongs to the Maf family. YhdE subfamily. It depends on a divalent metal cation as a cofactor.

It is found in the cytoplasm. It catalyses the reaction dTTP + H2O = dTMP + diphosphate + H(+). The enzyme catalyses UTP + H2O = UMP + diphosphate + H(+). Functionally, nucleoside triphosphate pyrophosphatase that hydrolyzes dTTP and UTP. May have a dual role in cell division arrest and in preventing the incorporation of modified nucleotides into cellular nucleic acids. In Wolbachia sp. subsp. Brugia malayi (strain TRS), this protein is dTTP/UTP pyrophosphatase.